The primary structure comprises 294 residues: Putative maltodextrin utilization protein YvdJ (294 aa).

A run of 4 helical transmembrane segments spans residues 35-55, 184-204, 228-248, and 249-269; these read LSFL…VSFV, MIMM…TFVL, IAIC…MVHF, and DLIT…SFAF.

It localises to the cell membrane. Functionally, could have a role in maltodextrin utilization. The protein is Putative maltodextrin utilization protein YvdJ (yvdJ) of Bacillus subtilis (strain 168).